Here is a 251-residue protein sequence, read N- to C-terminus: Cell division protein ZapD (251 aa).

This sequence belongs to the ZapD family. As to quaternary structure, interacts with FtsZ.

It localises to the cytoplasm. In terms of biological role, cell division factor that enhances FtsZ-ring assembly. Directly interacts with FtsZ and promotes bundling of FtsZ protofilaments, with a reduction in FtsZ GTPase activity. In Burkholderia orbicola (strain MC0-3), this protein is Cell division protein ZapD.